The sequence spans 423 residues: Adenylosuccinate synthetase (423 aa).

Residues 11-17 (GDEGKGK) and 39-41 (GHT) contribute to the GTP site. The active-site Proton acceptor is the Asp-12. Mg(2+)-binding residues include Asp-12 and Gly-39. Residues 12 to 15 (DEGK), 37 to 40 (NAGH), Thr-129, Arg-143, Asn-219, Thr-234, and Arg-298 contribute to the IMP site. His-40 functions as the Proton donor in the catalytic mechanism. Position 294–300 (294–300 (VTTGRRR)) interacts with substrate. GTP is bound by residues Arg-300, 326-328 (KLD), and 411-413 (GTG).

This sequence belongs to the adenylosuccinate synthetase family. Homodimer. Requires Mg(2+) as cofactor.

The protein localises to the cytoplasm. The catalysed reaction is IMP + L-aspartate + GTP = N(6)-(1,2-dicarboxyethyl)-AMP + GDP + phosphate + 2 H(+). It participates in purine metabolism; AMP biosynthesis via de novo pathway; AMP from IMP: step 1/2. In terms of biological role, plays an important role in the de novo pathway and in the salvage pathway of purine nucleotide biosynthesis. Catalyzes the first committed step in the biosynthesis of AMP from IMP. This Penicillium rubens (strain ATCC 28089 / DSM 1075 / NRRL 1951 / Wisconsin 54-1255) (Penicillium chrysogenum) protein is Adenylosuccinate synthetase.